A 156-amino-acid chain; its full sequence is MIP18 family protein galla-2 (156 aa).

Belongs to the MIP18 family. In terms of assembly, component of the CGX complex composed of crb, galla (galla-1 or galla-2) and Xpd. Interacts with crb (via intracellular domain). Also able to interact with Xpd in the absence of crb. Interacts with Mms19.

Its function is as follows. Component of the crb-galla-Xpd (CGX) complex which is essential for proper mitotic chromosome segregation in early embryos. The CGX complex is also required for cell proliferation in developing wing disks. In the CGX complex, acts with crb to recruit Xpd thus forming the functional complex. In Drosophila melanogaster (Fruit fly), this protein is MIP18 family protein galla-2.